Here is a 123-residue protein sequence, read N- to C-terminus: Glycine cleavage system H protein (123 aa).

One can recognise a Lipoyl-binding domain in the interval 23–104 (HWLAGITDHA…PYDAWIFSFE (82 aa)). Position 64 is an N6-lipoyllysine (K64).

The protein belongs to the GcvH family. The glycine cleavage system is composed of four proteins: P, T, L and H. It depends on (R)-lipoate as a cofactor.

Functionally, the glycine cleavage system catalyzes the degradation of glycine. The H protein shuttles the methylamine group of glycine from the P protein to the T protein. The sequence is that of Glycine cleavage system H protein from Methylobacillus flagellatus (strain ATCC 51484 / DSM 6875 / VKM B-1610 / KT).